A 338-amino-acid chain; its full sequence is UDP-glucose 4-epimerase (338 aa).

Residues 11–12 (YI), 31–36 (DNLCNS), 58–59 (DI), 80–84 (FAGLK), N99, S124, Y149, K153, and F178 contribute to the NAD(+) site. The substrate site is built by S124 and Y149. Catalysis depends on Y149, which acts as the Proton acceptor. Residues N179, 199-200 (NL), 216-218 (AVF), R231, 292-295 (RDGD), and Y299 each bind substrate.

The protein belongs to the NAD(P)-dependent epimerase/dehydratase family. As to quaternary structure, homodimer. NAD(+) serves as cofactor.

It carries out the reaction UDP-alpha-D-glucose = UDP-alpha-D-galactose. It participates in carbohydrate metabolism; galactose metabolism. Functionally, involved in the metabolism of galactose. Catalyzes the conversion of UDP-galactose (UDP-Gal) to UDP-glucose (UDP-Glc) through a mechanism involving the transient reduction of NAD. This chain is UDP-glucose 4-epimerase (galE), found in Salmonella typhimurium (strain LT2 / SGSC1412 / ATCC 700720).